The following is a 449-amino-acid chain: MLDKIVIANRGEIALRILRACKELGIKTVAVHSSADRDLKHVLLADETVCIGPAPSVKSYLNIPAIISAAEITGAVAIHPGYGFLSENANFAEQVERSGFIFIGPKAETIRLMGDKVSAIAAMKKAGVPCVPGSDGPLGDDMDKNRAIAKRIGYPVIIKASGGGGGRGMRVVRGDAELAQSISMTRAEAKAAFSNDMVYMEKYLENPRHVEIQVLADGQGNSIYLAERDCSMQRRHQKVVEEAPAPGITPELRRYIGERCAKACVDIGYRGAGTFEFLFENGEFYFIEMNTRIQVEHPVTEMITGVDLIKEQLRIAAGQPLSIKQEEVHVRGHAVECRINAEDPNTFLPSPGKITRFHAPGGFGVRWESHIYAGYTVPPYYDSMIGKLICYGENRDVAIARMKNALQELIIDGIKTNVDLQIRIMNDENFQHGGTNIHYLEKKLGLQEK.

A Biotin carboxylation domain is found at 1–445 (MLDKIVIANR…NIHYLEKKLG (445 aa)). ATP contacts are provided by residues lysine 116, lysine 159, 165-166 (GG), 201-204 (EKYL), histidine 209, and histidine 236. An ATP-grasp domain is found at 120 to 317 (IAAMKKAGVP…LIKEQLRIAA (198 aa)). Lysine 238 serves as a coordination point for hydrogencarbonate. Positions 276 and 288 each coordinate ATP. Glutamate 276, glutamate 288, and asparagine 290 together coordinate Mg(2+). 3 residues coordinate Mn(2+): glutamate 276, glutamate 288, and asparagine 290. 3 residues coordinate hydrogencarbonate: arginine 292, valine 295, and arginine 338. Residue arginine 292 is part of the active site. Arginine 338 is a binding site for biotin.

Acetyl-CoA carboxylase is a heterohexamer of biotin carboxyl carrier protein, biotin carboxylase and the two subunits of carboxyl transferase in a 2:2 complex. Mg(2+) is required as a cofactor. The cofactor is Mn(2+).

The enzyme catalyses N(6)-biotinyl-L-lysyl-[protein] + hydrogencarbonate + ATP = N(6)-carboxybiotinyl-L-lysyl-[protein] + ADP + phosphate + H(+). It functions in the pathway lipid metabolism; malonyl-CoA biosynthesis; malonyl-CoA from acetyl-CoA: step 1/1. This protein is a component of the acetyl coenzyme A carboxylase complex; first, biotin carboxylase catalyzes the carboxylation of the carrier protein and then the transcarboxylase transfers the carboxyl group to form malonyl-CoA. This is Biotin carboxylase (accC) from Escherichia coli O157:H7.